The chain runs to 173 residues: MPRTQRNDNFIDKSFTVMADIILKMLPANKKAKEAFVYYRDGMSAQADGEYAEALDNYYEALTLEEDPNDRSYILYNIGIIHASNGEHEKALEYYEEAIQLNPRMPSALNNIAVIYHFQGEKAREDGQQAEAEALYDKAAEYWKQAIRLAPNNYIEAQNWLKITGRSEIDVFF.

3 TPR repeats span residues 35–68 (AFVYYRDGMSAQADGEYAEALDNYYEALTLEEDP), 72–105 (SYILYNIGIIHASNGEHEKALEYYEEAIQLNPRM), and 120–153 (GEKAREDGQQAEAEALYDKAAEYWKQAIRLAPNN).

It belongs to the Ycf3 family.

It localises to the cellular thylakoid membrane. Functionally, essential for the assembly of the photosystem I (PSI) complex. May act as a chaperone-like factor to guide the assembly of the PSI subunits. This chain is Photosystem I assembly protein Ycf3, found in Microcystis aeruginosa (strain NIES-843 / IAM M-2473).